The primary structure comprises 132 residues: Small ribosomal subunit protein uS8c (132 aa).

It belongs to the universal ribosomal protein uS8 family. In terms of assembly, part of the 30S ribosomal subunit.

It is found in the plastid. It localises to the chloroplast. In terms of biological role, one of the primary rRNA binding proteins, it binds directly to 16S rRNA central domain where it helps coordinate assembly of the platform of the 30S subunit. This is Small ribosomal subunit protein uS8c (rps8) from Trieres chinensis (Marine centric diatom).